A 269-amino-acid polypeptide reads, in one-letter code: Shikimate dehydrogenase (NADP(+)) (269 aa).

Shikimate is bound by residues 14 to 16 (SKS) and Thr61. The active-site Proton acceptor is the Lys65. Glu77 serves as a coordination point for NADP(+). The shikimate site is built by Asn86 and Asp102. NADP(+) is bound by residues 126–130 (GAGGA), 150–155 (NRTYEK), and Met213. Tyr215 is a binding site for shikimate. Residue Gly237 participates in NADP(+) binding.

It belongs to the shikimate dehydrogenase family. Homodimer.

It catalyses the reaction shikimate + NADP(+) = 3-dehydroshikimate + NADPH + H(+). The protein operates within metabolic intermediate biosynthesis; chorismate biosynthesis; chorismate from D-erythrose 4-phosphate and phosphoenolpyruvate: step 4/7. In terms of biological role, involved in the biosynthesis of the chorismate, which leads to the biosynthesis of aromatic amino acids. Catalyzes the reversible NADPH linked reduction of 3-dehydroshikimate (DHSA) to yield shikimate (SA). The sequence is that of Shikimate dehydrogenase (NADP(+)) from Aliivibrio fischeri (strain ATCC 700601 / ES114) (Vibrio fischeri).